The chain runs to 474 residues: Cysteine--tRNA ligase (474 aa).

Cysteine 27 lines the Zn(2+) pocket. The 'HIGH' region signature appears at 29–39; the sequence is PTVYNYIHIGN. Zn(2+)-binding residues include cysteine 212, histidine 237, and glutamate 241. A 'KMSKS' region motif is present at residues 271 to 275; that stretch reads KMSKS. Lysine 274 contributes to the ATP binding site.

It belongs to the class-I aminoacyl-tRNA synthetase family. In terms of assembly, monomer. Zn(2+) serves as cofactor.

The protein resides in the cytoplasm. It carries out the reaction tRNA(Cys) + L-cysteine + ATP = L-cysteinyl-tRNA(Cys) + AMP + diphosphate. This Lactobacillus delbrueckii subsp. bulgaricus (strain ATCC BAA-365 / Lb-18) protein is Cysteine--tRNA ligase.